The primary structure comprises 361 residues: Tyrosine--tRNA ligase (361 aa).

The L-tyrosine site is built by Tyr36, Tyr162, Gln166, Asp169, and Gln184. Positions 236–240 (KMSKS) match the 'KMSKS' region motif. Lys239 is a binding site for ATP.

It belongs to the class-I aminoacyl-tRNA synthetase family. TyrS type 4 subfamily. As to quaternary structure, homodimer.

The protein resides in the cytoplasm. The catalysed reaction is tRNA(Tyr) + L-tyrosine + ATP = L-tyrosyl-tRNA(Tyr) + AMP + diphosphate + H(+). Functionally, catalyzes the attachment of tyrosine to tRNA(Tyr) in a two-step reaction: tyrosine is first activated by ATP to form Tyr-AMP and then transferred to the acceptor end of tRNA(Tyr). This Saccharolobus islandicus (strain L.S.2.15 / Lassen #1) (Sulfolobus islandicus) protein is Tyrosine--tRNA ligase.